The primary structure comprises 25 residues: CKGKGASCHRTSYDCCTGSCNRGKC.

Cystine bridges form between C1–C16, C8–C20, and C15–C25. C25 is subject to Cysteine amide.

Belongs to the conotoxin O1 superfamily. Expressed by the venom duct.

The protein resides in the secreted. Functionally, omega-conotoxins act at presynaptic membranes, they bind and block voltage-gated calcium channels (Cav). In Conus magus (Magical cone), this protein is Omega-conotoxin MVIIB.